The primary structure comprises 152 residues: Transcriptional repressor NrdR (152 aa).

A zinc finger spans residues 3 to 34 (CPSCQHNGTRVLDSRPVDDGKSIRRRRECESC). The ATP-cone domain maps to 49 to 139 (LIVVKKEGVR…VYRQFKDINV (91 aa)).

Belongs to the NrdR family. Zn(2+) serves as cofactor.

Negatively regulates transcription of bacterial ribonucleotide reductase nrd genes and operons by binding to NrdR-boxes. The chain is Transcriptional repressor NrdR from Bacillus subtilis (strain 168).